Reading from the N-terminus, the 807-residue chain is Glycerol-3-phosphate acyltransferase (807 aa).

Residues 308 to 313 (CHRSHM) carry the HXXXXD motif motif.

Belongs to the GPAT/DAPAT family.

The protein resides in the cell inner membrane. The enzyme catalyses sn-glycerol 3-phosphate + an acyl-CoA = a 1-acyl-sn-glycero-3-phosphate + CoA. It functions in the pathway phospholipid metabolism; CDP-diacylglycerol biosynthesis; CDP-diacylglycerol from sn-glycerol 3-phosphate: step 1/3. The protein is Glycerol-3-phosphate acyltransferase of Shewanella halifaxensis (strain HAW-EB4).